We begin with the raw amino-acid sequence, 384 residues long: S-adenosylmethionine synthase (384 aa).

Histidine 15 lines the ATP pocket. Aspartate 17 serves as a coordination point for Mg(2+). Glutamate 43 provides a ligand contact to K(+). The L-methionine site is built by glutamate 56 and glutamine 99. The interval glutamine 99 to lysine 109 is flexible loop. ATP is bound by residues aspartate 164 to lysine 166, arginine 230 to phenylalanine 231, aspartate 239, arginine 245 to lysine 246, alanine 262, and lysine 266. Residue aspartate 239 coordinates L-methionine. Lysine 270 is a binding site for L-methionine.

It belongs to the AdoMet synthase family. As to quaternary structure, homotetramer; dimer of dimers. The cofactor is Mg(2+). Requires K(+) as cofactor.

Its subcellular location is the cytoplasm. It carries out the reaction L-methionine + ATP + H2O = S-adenosyl-L-methionine + phosphate + diphosphate. It participates in amino-acid biosynthesis; S-adenosyl-L-methionine biosynthesis; S-adenosyl-L-methionine from L-methionine: step 1/1. Catalyzes the formation of S-adenosylmethionine (AdoMet) from methionine and ATP. The overall synthetic reaction is composed of two sequential steps, AdoMet formation and the subsequent tripolyphosphate hydrolysis which occurs prior to release of AdoMet from the enzyme. This is S-adenosylmethionine synthase from Vibrio parahaemolyticus serotype O3:K6 (strain RIMD 2210633).